Consider the following 226-residue polypeptide: MTNIKHLAIIMDGNARWADQHNLTKSEGHKAGADKIRELLPEFLNLNIPYITLYTFSSENWQRSSTEVDFLIKLLSIYLKTELNNLHKNGVKIKVIGRLTLLSSSLQKQINNAIELTKNNNKITLCIAFSYGSRQEIVDACTKIITSGKKAVSDSDIQHALYDPEMPDVDLLIRPGGVYRISNFLLWQAAYAELYFSPKYWPDFNKYDIQEAINDYSKRKRTFGKR.

Residue Asp-12 is part of the active site. Position 12 (Asp-12) interacts with Mg(2+). Residues 13-16 (GNAR), Trp-17, Lys-25, His-29, and 57-59 (SSE) contribute to the substrate site. Asn-60 acts as the Proton acceptor in catalysis. Residues Trp-61, Arg-63, Arg-174, and 180-182 (RIS) each bind substrate. Residue Glu-193 coordinates Mg(2+).

Belongs to the UPP synthase family. As to quaternary structure, homodimer. It depends on Mg(2+) as a cofactor.

Its function is as follows. Catalyzes the condensation of isopentenyl diphosphate (IPP) with allylic pyrophosphates generating different type of terpenoids. This is Isoprenyl transferase from Rickettsia sibirica (strain ATCC VR-151 / 246).